Here is a 646-residue protein sequence, read N- to C-terminus: MDAYTVDGNAVSLPIYVAGYIALYDMGDGGELTLTRETVAAALPPASRLPINIDHRNGCVVGEVLSIVDDARGPFFLGIINCPQLGAVLATAAGPDFFGELSEGLSEQERLLYLVSNYLPSASLSSRRLGPDEEPDETLFAHVSLCVIGRRVGTIVTYDATPENAVAPFKRLSPSSREELLITAREAQSRLGDAATWHLSEDTLTRVLLSTAVNNMLLRNRWNLVARRRREAGIEGHTYLQASASFGITNGCNKADFCGAELVDTCGYKSGEKVHGAPYSRVTLGAKAFTSSSPNALPSSDNDKGGIGERTQKHISAMASSNPQTLSAAGAPLVSGDYILVPAAQYNQLVVGQHTSHPPINAGPAPVTHAVPSQYIPPAYNSLMPPSMYQAPPYWSVPHSANLEAQITALVGALAADRKATKGSDPHVIQGSQCSPPLSPQQERRYARKRRHDWDATTRDDLEGIYYPGERSPRPGERRAGRPSTTIADLMGAVSSLQQEVSQLRAIQTVTAQPQAAPAGLYKPIPAVPPQYSQYQYIQPQHAVSAIVAPQLPGIPSQPTQAVLAPQVPAGEAPGSAKVVAASTAPQQAEQARAAPQQFEAVTSAAVLPVTQPQASSQTVDASASTGLEFGRDDADIFVSQMMSAR.

Active-site charge relay system residues include His-55, Ser-123, and His-142. Residues 336-355 (GDYILVPAAQYNQLVVGQHT) form an interaction with pAP region. The tract at residues 421–483 (TKGSDPHVIQ…RPGERRAGRP (63 aa)) is disordered. The Nuclear localization signal signature appears at 445-451 (RYARKRR). Composition is skewed to basic and acidic residues over residues 452–462 (HDWDATTRDDL) and 471–480 (RSPRPGERRA). The segment at 626 to 646 (TGLEFGRDDADIFVSQMMSAR) is interaction with major capsid protein.

This sequence belongs to the herpesviridae capsid scaffolding protein family. In terms of assembly, homomultimer. Interacts with major capsid protein. As to quaternary structure, exists in a monomer-dimer equilibrium with the dimer being the active species. Capsid scaffolding protein is cleaved by assemblin after formation of the spherical procapsid. As a result, the capsid obtains its mature, icosahedral shape. Cleavages occur at two or more sites: release (R-site) and maturation (M-site).

It is found in the host cytoplasm. Its subcellular location is the host nucleus. The catalysed reaction is Cleaves -Ala-|-Ser- and -Ala-|-Ala- bonds in the scaffold protein.. Its function is as follows. Acts as a scaffold protein by binding major capsid protein in the cytoplasm, inducing the nuclear localization of both proteins. Multimerizes in the nucleus such as major capsid protein forms the icosahedral T=16 capsid. Autocatalytic cleavage releases the assembly protein, and subsequently abolishes interaction with major capsid protein. Cleavages products are evicted from the capsid before or during DNA packaging. In terms of biological role, protease that plays an essential role in virion assembly within the nucleus. Catalyzes the cleavage of the assembly protein after formation of the spherical procapsid. By that cleavage, the capsid matures and gains its icosahedral shape. The cleavage sites seem to include -Ala-Ser-, -Ala-Ala-, as well as Ala-Thr bonds. Assemblin and cleavages products are evicted from the capsid before or during DNA packaging. Functionally, plays a major role in capsid assembly. Acts as a scaffold protein by binding major capsid protein. Multimerizes in the nucleus such as major capsid protein forms the icosahedral T=16 capsid. Cleaved by assemblin after capsid completion. The cleavages products are evicted from the capsid before or during DNA packaging. The protein is Capsid scaffolding protein (35) of Equus caballus (Horse).